A 541-amino-acid chain; its full sequence is Sialate O-acetylesterase (541 aa).

The signal sequence occupies residues 1-23; sequence MVSPGPVFGIVLLIIARVSRSAG. 8 N-linked (GlcNAc...) asparagine glycosylation sites follow: N107, N138, N188, N293, N356, N427, N448, and N462.

Disulfide-linked heterodimer of a small subunit and a large subunit. The two subunits are derived from a single precursor by proteolytic cleavage. In terms of processing, the lysosomal isoform is glycosylated. As to expression, highly expressed in liver, testis, and kidney, whereas skeletal muscle, adipose tissue, and heart have lower levels. In terms of tissue distribution, highest expression in brain and ovary and lower levels in liver and thymus.

It is found in the lysosome. The protein resides in the cytoplasm. The enzyme catalyses N-acetyl-9-O-acetylneuraminate + H2O = N-acetylneuraminate + acetate + H(+). The catalysed reaction is an Ac-O-9-sialoglycoconjugate + H2O = a sialoglycoconjugate + acetate + H(+). With respect to regulation, inhibited by diisopropyl fluorophosphate and diethyl-P-nitrophenyl phosphate. In terms of biological role, catalyzes the removal of O-acetyl ester groups from position 9 of the free diacetylated sialate N-acetyl-9-O-acetylneuraminate (Neu5,9Ac2) in the cytosol and of the diacetylated sialate residues of sialylglycoconjugates in the lysosomes. Together with the sialate-O-acetyltransferase they regulate the balance of acetylated sialoglycoconjugates, key players in various processes such as cell-cell interactions, host-pathogen recognition, and tumor antigenicity. In Mus musculus (Mouse), this protein is Sialate O-acetylesterase (Siae).